We begin with the raw amino-acid sequence, 201 residues long: ADP-ribosylation factor-related protein 1 (201 aa).

Met1 carries the post-translational modification N-acetylmethionine. Residues 24-31 (GLDNAGKT), 75-79 (DLGGQ), and 134-137 (NKQD) contribute to the GTP site.

The protein belongs to the small GTPase superfamily. Arf family. As to quaternary structure, interacts with SYS1.

Its subcellular location is the golgi apparatus. The protein localises to the trans-Golgi network. In terms of biological role, trans-Golgi-associated GTPase that regulates protein sorting. Controls the targeting of ARL1 and its effector to the trans-Golgi. Required for the lipidation of chylomicrons in the intestine and required for VLDL lipidation in the liver. The chain is ADP-ribosylation factor-related protein 1 (ARFRP1) from Pongo abelii (Sumatran orangutan).